We begin with the raw amino-acid sequence, 467 residues long: Fumarate hydratase class II (467 aa).

Residues 98–100 (SGT), R126, 129–132 (HPND), 139–141 (SSN), and T187 contribute to the substrate site. H188 serves as the catalytic Proton donor/acceptor. The active site involves S318. Substrate is bound by residues S319 and 324–326 (KVN).

It belongs to the class-II fumarase/aspartase family. Fumarase subfamily. In terms of assembly, homotetramer.

The protein localises to the cytoplasm. The enzyme catalyses (S)-malate = fumarate + H2O. It participates in carbohydrate metabolism; tricarboxylic acid cycle; (S)-malate from fumarate: step 1/1. In terms of biological role, involved in the TCA cycle. Catalyzes the stereospecific interconversion of fumarate to L-malate. In Escherichia coli O6:H1 (strain CFT073 / ATCC 700928 / UPEC), this protein is Fumarate hydratase class II.